A 246-amino-acid chain; its full sequence is Small ribosomal subunit protein uS2 (246 aa).

This sequence belongs to the universal ribosomal protein uS2 family.

In Exiguobacterium sp. (strain ATCC BAA-1283 / AT1b), this protein is Small ribosomal subunit protein uS2.